Here is a 152-residue protein sequence, read N- to C-terminus: D-aminoacyl-tRNA deacylase (152 aa).

Positions 137–138 match the Gly-cisPro motif, important for rejection of L-amino acids motif; sequence GP.

It belongs to the DTD family. Homodimer.

The protein resides in the cytoplasm. The catalysed reaction is glycyl-tRNA(Ala) + H2O = tRNA(Ala) + glycine + H(+). The enzyme catalyses a D-aminoacyl-tRNA + H2O = a tRNA + a D-alpha-amino acid + H(+). Functionally, an aminoacyl-tRNA editing enzyme that deacylates mischarged D-aminoacyl-tRNAs. Also deacylates mischarged glycyl-tRNA(Ala), protecting cells against glycine mischarging by AlaRS. Acts via tRNA-based rather than protein-based catalysis; rejects L-amino acids rather than detecting D-amino acids in the active site. By recycling D-aminoacyl-tRNA to D-amino acids and free tRNA molecules, this enzyme counteracts the toxicity associated with the formation of D-aminoacyl-tRNA entities in vivo and helps enforce protein L-homochirality. This Geobacillus sp. (strain WCH70) protein is D-aminoacyl-tRNA deacylase.